The following is a 358-amino-acid chain: DNA polymerase IV (358 aa).

Positions 4–185 (IIHIDMDCYF…LSLRKIPGVG (182 aa)) constitute a UmuC domain. 2 residues coordinate Mg(2+): aspartate 8 and aspartate 103. Residue glutamate 104 is part of the active site.

The protein belongs to the DNA polymerase type-Y family. In terms of assembly, monomer. It depends on Mg(2+) as a cofactor.

It localises to the cytoplasm. The catalysed reaction is DNA(n) + a 2'-deoxyribonucleoside 5'-triphosphate = DNA(n+1) + diphosphate. Functionally, poorly processive, error-prone DNA polymerase involved in untargeted mutagenesis. Copies undamaged DNA at stalled replication forks, which arise in vivo from mismatched or misaligned primer ends. These misaligned primers can be extended by PolIV. Exhibits no 3'-5' exonuclease (proofreading) activity. May be involved in translesional synthesis, in conjunction with the beta clamp from PolIII. The protein is DNA polymerase IV of Shewanella baltica (strain OS185).